Reading from the N-terminus, the 191-residue chain is Small ribosomal subunit protein uS7 (191 aa).

Positions 56-80 (NKSGEQGDGDGESGGKAGGIKKRSL) are disordered.

The protein belongs to the universal ribosomal protein uS7 family. In terms of assembly, part of the 30S ribosomal subunit. Contacts proteins S9 and S11.

Functionally, one of the primary rRNA binding proteins, it binds directly to 16S rRNA where it nucleates assembly of the head domain of the 30S subunit. Is located at the subunit interface close to the decoding center, probably blocks exit of the E-site tRNA. In Coxiella burnetii (strain RSA 493 / Nine Mile phase I), this protein is Small ribosomal subunit protein uS7.